The following is a 190-amino-acid chain: Small ribosomal subunit protein mS23 (190 aa).

N-acetylalanine is present on A2. Residue K83 is modified to N6-succinyllysine. Position 102 is an N6-acetyllysine (K102). The tract at residues 137 to 190 is disordered; it reads KARTQQEGSQVSRKSESMGVESQTALEENPPLKEVPQAQHLESPGEESKGLSPP.

The protein belongs to the mitochondrion-specific ribosomal protein mS23 family. Component of the mitochondrial ribosome small subunit (28S) which comprises a 12S rRNA and about 30 distinct proteins.

Its subcellular location is the mitochondrion. This chain is Small ribosomal subunit protein mS23, found in Bos taurus (Bovine).